We begin with the raw amino-acid sequence, 67 residues long: Beta-defensin 103A (67 aa).

A signal peptide spans 1–22 (MRIHYLLFTLLFLFLVPVPGHG). 3 disulfide bridges follow: C33/C62, C40/C55, and C45/C63.

It belongs to the beta-defensin family.

The protein localises to the secreted. Functionally, exhibits antimicrobial activity against Gram-positive and Gram-negative bacteria. The chain is Beta-defensin 103A (DEFB103A) from Gorilla gorilla gorilla (Western lowland gorilla).